A 185-amino-acid polypeptide reads, in one-letter code: uncharacterized protein (185 aa).

Positions 39–177 constitute a Nudix hydrolase domain; sequence LWHASAGVLV…SWPFVPDSRA (139 aa). The short motif at 77–99 is the Nudix box element; it reads GGVVDPGETPQETAIREVGEELG. Glu-93 and Glu-97 together coordinate Mg(2+).

The protein belongs to the Nudix hydrolase family. Mg(2+) is required as a cofactor.

This is an uncharacterized protein from Rhodococcus erythropolis (Arthrobacter picolinophilus).